Consider the following 292-residue polypeptide: tRNA pseudouridine synthase B (292 aa).

Catalysis depends on Asp-38, which acts as the Nucleophile.

The protein belongs to the pseudouridine synthase TruB family. Type 1 subfamily.

The catalysed reaction is uridine(55) in tRNA = pseudouridine(55) in tRNA. Responsible for synthesis of pseudouridine from uracil-55 in the psi GC loop of transfer RNAs. This Streptococcus sanguinis (strain SK36) protein is tRNA pseudouridine synthase B.